A 981-amino-acid chain; its full sequence is MLCDSSESVSFSSISKEEDTPIARLLKNAKETPDHRFISVYNERGIVAKYTYTELLRRVNTIAKFCDDLGLGKTVGIHMGHELDFLCSIFALWATGRTCVIFNQIWSQQVVRVLVKRLNISDLLYHEYKPKFEVDTLNATSLASLPLDIDAPCIRAGLEPEVALINHSSGSTGVPKSMPFLMKKYALGYDYGTPEFMNHLSTPMVMATSFALTTLSWINALYCNGNLLYPSSSISATCTSEAERLAWNVYYALRAGCERLIILPNLLVLTLQIMPDKEECFPACKLVAAGGEMVPANMYHTCKRVLPNATIYPQYGTTESGLVSFLAYNGKDTLHNKELVYFPGKTVKKLMLVTEDNEAVPEKIGCEGFVCVVTDVQSEPYVGDDAETIQSRNSTFINYDGQPAVRFADLAVWNSYKGKLGITIKGRLGRRVKRNGVFFDLKYFDQVVVGLKEVKDAFSFFIFNRFVLVYVPAYNGVDPVTLKQKLNKELRDHHLFSSCFPLADIPRNAAGKVDLKSIETYASKCLSVEDQRLPVLLNPVAIEISKIASKILQNPSLEGKDAPLYSCGLDSIHSVRFFHAIQSHFHLEGPIRYNMNSNCTPNSIASIIQKKSYNVSSITYELLNEDACALSRTIPKLSILPTNGQYFLLTGATGYFGRRFLEYLVKLNISVVCLVRESSDEAAKERLISLVPSLRISSENIIVWAAHVEEIRFGLDDAKWEFLVENVSRIYHMAAEVHWMKSYQELRPANVLGTKTVLELSVMGPKALYFISGGGQQEVELDDDTQSAKASGYALSKYVAELLCRKISDLGHPLIYVIRPGFIIANDGEILSRDFFWRFVATALRMGIWPQSDESQSLVFHISTTDALCMTLTQILEKEADAYAPLLAYDKFDGDEFACICESMKNVKLDFVTLEDWLKALEKDVDEKGEDHPLFALQHATKFALKSSMTPSNGLRNIYPLSETFLTKEAIANGLENLYIE.

A Carrier domain is found at 535–612 (VLLNPVAIEI…SIASIIQKKS (78 aa)). Serine 571 is modified (O-(pantetheine 4'-phosphoryl)serine).

This sequence belongs to the ATP-dependent AMP-binding enzyme family.

This is an uncharacterized protein from Schizosaccharomyces pombe (strain 972 / ATCC 24843) (Fission yeast).